Consider the following 196-residue polypeptide: FMN-dependent NADH:quinone oxidoreductase (196 aa).

Residues Ser10 and 17–19 (SYS) each bind FMN.

Belongs to the azoreductase type 1 family. In terms of assembly, homodimer. Requires FMN as cofactor.

The catalysed reaction is 2 a quinone + NADH + H(+) = 2 a 1,4-benzosemiquinone + NAD(+). The enzyme catalyses N,N-dimethyl-1,4-phenylenediamine + anthranilate + 2 NAD(+) = 2-(4-dimethylaminophenyl)diazenylbenzoate + 2 NADH + 2 H(+). Functionally, quinone reductase that provides resistance to thiol-specific stress caused by electrophilic quinones. Its function is as follows. Also exhibits azoreductase activity. Catalyzes the reductive cleavage of the azo bond in aromatic azo compounds to the corresponding amines. This is FMN-dependent NADH:quinone oxidoreductase from Metamycoplasma arthritidis (strain 158L3-1) (Mycoplasma arthritidis).